Here is a 156-residue protein sequence, read N- to C-terminus: DNA mismatch endonuclease Vsr (156 aa).

The Mg(2+) site is built by aspartate 51 and threonine 63.

It belongs to the Vsr family. Requires Mg(2+) as cofactor. It depends on Zn(2+) as a cofactor.

Functionally, deamination of 5-methylcytosine in DNA results in T/G mismatches. If unrepaired, these mismatches can lead to C-to-T transition mutations. The very short patch (VSP) repair process in E.coli counteracts the mutagenic process by repairing the mismatches in favor of the G-containing strand. This enzyme is an endonuclease that nicks double-stranded DNA within the sequence CT(AT)GN or NT(AT)GG next to the thymidine residue that is mismatched to 2'-deoxyguanosine. The incision is mismatch-dependent and strand-specific. The sequence is that of DNA mismatch endonuclease Vsr from Escherichia coli (strain K12).